Consider the following 421-residue polypeptide: MSKTHLTEQKFSDFALHPKVVEALEKKGFHNCTPIQALALPLTLAGRDVAGQAQTGTGKTMAFLTSTFHCLLSHPAIADRKVNQPRALIMAPTRELAVQIHADAEPLAEATGLKLGLAYGGDGYDKQLKVLESGVDILIGTTGRLIDYAKQNHINLGAIQVVVLDEADRMYDLGFIKDIRWLFRRMPPANQRLNMLFSATLSYRVRELAFEQMNNAEYIEVEPEQKTGHRIKEELFYPSNEEKMRLLQTLIEEEWPDRAIIFANTKHRCEEIWGHLAADGHRVGLLTGDVAQKKRLRILDEFTRGDLDILVATDVAARGLHIPAVTHVFNYDLPDDCEDYVHRIGRTGRAGANGHSISLACEEYALNLPAIETYIGHSIPVSKYNPDALMTDLPKPLRLTRPRTGNGPRRTGAPRNRRRSG.

The short motif at 9–37 (QKFSDFALHPKVVEALEKKGFHNCTPIQA) is the Q motif element. The Helicase ATP-binding domain occupies 40–219 (LPLTLAGRDV…FEQMNNAEYI (180 aa)). 53 to 60 (AQTGTGKT) is an ATP binding site. A DEAD box motif is present at residues 165 to 168 (DEAD). The region spanning 245–390 (RLLQTLIEEE…VSKYNPDALM (146 aa)) is the Helicase C-terminal domain. The tract at residues 392–421 (DLPKPLRLTRPRTGNGPRRTGAPRNRRRSG) is disordered. Low complexity predominate over residues 402 to 414 (PRTGNGPRRTGAP).

This sequence belongs to the DEAD box helicase family. RhlB subfamily. As to quaternary structure, component of the RNA degradosome, which is a multiprotein complex involved in RNA processing and mRNA degradation.

Its subcellular location is the cytoplasm. It carries out the reaction ATP + H2O = ADP + phosphate + H(+). Functionally, DEAD-box RNA helicase involved in RNA degradation. Has RNA-dependent ATPase activity and unwinds double-stranded RNA. The sequence is that of ATP-dependent RNA helicase RhlB from Escherichia coli O157:H7.